We begin with the raw amino-acid sequence, 398 residues long: Inner membrane protein YjgN (398 aa).

Over 1–24 the chain is Cytoplasmic; that stretch reads MAQVINEMDVPSHSFVFHGTGERY. The helical transmembrane segment at 25–45 threads the bilayer; sequence FLICVVNVLLTIITLGIYLPW. Topologically, residues 46–73 are periplasmic; that stretch reads ALMKCKRYLYANMEVNGQRFSYGITGGN. A helical transmembrane segment spans residues 74 to 94; sequence VFFSCLVFVFFYFAILMTVSA. Position 95 (aspartate 95) is a topological domain, cytoplasmic. The chain crosses the membrane as a helical span at residues 96–116; sequence MPLIGCVLTLSLLVLLIFMAA. Residues 117–142 lie on the Periplasmic side of the membrane; it reads KGLRYQALMTSLNGVRFSFNCSMKGV. A helical membrane pass occupies residues 143 to 163; it reads WWVTFFLPILMAIGMGTVFFI. Residues 164–175 are Cytoplasmic-facing; that stretch reads STKMLHANSSSS. Residues 176–196 traverse the membrane as a helical segment; sequence VIVSVVLMAIVGIVSIGIFNG. Topologically, residues 197 to 228 are periplasmic; that stretch reads TLYSLVMSFLWSNTSFGIHRFKVKLDTAYCIK. Residues 229 to 249 traverse the membrane as a helical segment; it reads YAILAFLALLPFLAVAGYIIF. At 250-278 the chain is on the cytoplasmic side; that stretch reads DQILNAYDSSVYANDDIENLQQFMEMQRK. The chain crosses the membrane as a helical span at residues 279 to 299; sequence MIIAQLIYYFGIAVSTSYLTV. The Periplasmic segment spans residues 300–333; it reads SLRNHFMSNLSLNDGRIRFRSTLTYHGMLYRMCA. The chain crosses the membrane as a helical span at residues 334-354; it reads LVVISGITGGLAYPLLKIWMI. Residues 355–398 are Cytoplasmic-facing; sequence DWQAKNTYLLGDLDDLPLINKEEQPDKGFLASISRGIMPSLPFL.

It localises to the cell inner membrane. The protein is Inner membrane protein YjgN (yjgN) of Escherichia coli O157:H7.